A 426-amino-acid chain; its full sequence is GTPase HflX (426 aa).

The 168-residue stretch at 198 to 365 (PTVSLVGYTN…ALTERLSGEV (168 aa)) folds into the Hflx-type G domain. GTP contacts are provided by residues 204 to 211 (GYTNAGKS), 229 to 233 (FATLD), 251 to 254 (DTVG), 317 to 320 (NKID), and 343 to 345 (SAQ). Mg(2+) contacts are provided by Ser-211 and Thr-231.

It belongs to the TRAFAC class OBG-HflX-like GTPase superfamily. HflX GTPase family. Monomer. Associates with the 50S ribosomal subunit. This interaction occurs in the presence of GTP, GDP, ATP or ADP, but not in their absence. Mg(2+) is required as a cofactor.

Its subcellular location is the cytoplasm. Intrinsic GTPase activity is very slow and can be stimulated by the presence of 50S ribosomal subunits or 70S ribosomes. GTPase activity is inhibited by ATP. GTPase that associates with the 50S ribosomal subunit and may have a role during protein synthesis or ribosome biogenesis. In vitro, also exhibits ATPase activity. This Escherichia coli (strain K12) protein is GTPase HflX.